Here is a 240-residue protein sequence, read N- to C-terminus: Aspartate/glutamate leucyltransferase (240 aa).

This sequence belongs to the R-transferase family. Bpt subfamily.

It localises to the cytoplasm. It carries out the reaction N-terminal L-glutamyl-[protein] + L-leucyl-tRNA(Leu) = N-terminal L-leucyl-L-glutamyl-[protein] + tRNA(Leu) + H(+). The catalysed reaction is N-terminal L-aspartyl-[protein] + L-leucyl-tRNA(Leu) = N-terminal L-leucyl-L-aspartyl-[protein] + tRNA(Leu) + H(+). Its function is as follows. Functions in the N-end rule pathway of protein degradation where it conjugates Leu from its aminoacyl-tRNA to the N-termini of proteins containing an N-terminal aspartate or glutamate. In Thiobacillus denitrificans (strain ATCC 25259 / T1), this protein is Aspartate/glutamate leucyltransferase.